The sequence spans 397 residues: Elongation factor Tu (397 aa).

The tr-type G domain maps to 10–206 (KPHVNIGTIG…AVDEYIPTPE (197 aa)). Residues 19–26 (GHIDHGKT) are G1. 19–26 (GHIDHGKT) is a GTP binding site. Residue Thr-26 participates in Mg(2+) binding. The interval 62–66 (GITIS) is G2. Residues 83 to 86 (DCPG) form a G3 region. Residues 83 to 87 (DCPGH) and 138 to 141 (NKCD) contribute to the GTP site. A G4 region spans residues 138 to 141 (NKCD). The interval 176 to 178 (AAF) is G5.

This sequence belongs to the TRAFAC class translation factor GTPase superfamily. Classic translation factor GTPase family. EF-Tu/EF-1A subfamily. In terms of assembly, monomer.

The protein localises to the cytoplasm. It catalyses the reaction GTP + H2O = GDP + phosphate + H(+). Functionally, GTP hydrolase that promotes the GTP-dependent binding of aminoacyl-tRNA to the A-site of ribosomes during protein biosynthesis. This Nocardioides sp. (strain ATCC BAA-499 / JS614) protein is Elongation factor Tu.